The sequence spans 538 residues: Bifunctional purine biosynthesis protein PurH (538 aa).

One can recognise an MGS-like domain in the interval 6–158 (KHIPAPDLHR…KNHAYVATVV (153 aa)).

The protein belongs to the PurH family.

It carries out the reaction (6R)-10-formyltetrahydrofolate + 5-amino-1-(5-phospho-beta-D-ribosyl)imidazole-4-carboxamide = 5-formamido-1-(5-phospho-D-ribosyl)imidazole-4-carboxamide + (6S)-5,6,7,8-tetrahydrofolate. The catalysed reaction is IMP + H2O = 5-formamido-1-(5-phospho-D-ribosyl)imidazole-4-carboxamide. The protein operates within purine metabolism; IMP biosynthesis via de novo pathway; 5-formamido-1-(5-phospho-D-ribosyl)imidazole-4-carboxamide from 5-amino-1-(5-phospho-D-ribosyl)imidazole-4-carboxamide (10-formyl THF route): step 1/1. It participates in purine metabolism; IMP biosynthesis via de novo pathway; IMP from 5-formamido-1-(5-phospho-D-ribosyl)imidazole-4-carboxamide: step 1/1. The chain is Bifunctional purine biosynthesis protein PurH from Brucella abortus (strain S19).